The following is a 300-amino-acid chain: Acetyl-coenzyme A carboxylase carboxyl transferase subunit beta 2 (300 aa).

One can recognise a CoA carboxyltransferase N-terminal domain in the interval 26–294 (VWVKCPSCRE…SGAYSSEAVA (269 aa)). Residues cysteine 30, cysteine 33, cysteine 49, and cysteine 51 each coordinate Zn(2+). The segment at 30 to 51 (CPSCRELIYHKQLAERMKVCRC) adopts a C4-type zinc-finger fold.

The protein belongs to the AccD/PCCB family. As to quaternary structure, acetyl-CoA carboxylase is a heterohexamer composed of biotin carboxyl carrier protein (AccB), biotin carboxylase (AccC) and two subunits each of ACCase subunit alpha (AccA) and ACCase subunit beta (AccD). Requires Zn(2+) as cofactor.

The protein resides in the cytoplasm. It carries out the reaction N(6)-carboxybiotinyl-L-lysyl-[protein] + acetyl-CoA = N(6)-biotinyl-L-lysyl-[protein] + malonyl-CoA. It participates in lipid metabolism; malonyl-CoA biosynthesis; malonyl-CoA from acetyl-CoA: step 1/1. In terms of biological role, component of the acetyl coenzyme A carboxylase (ACC) complex. Biotin carboxylase (BC) catalyzes the carboxylation of biotin on its carrier protein (BCCP) and then the CO(2) group is transferred by the transcarboxylase to acetyl-CoA to form malonyl-CoA. The polypeptide is Acetyl-coenzyme A carboxylase carboxyl transferase subunit beta 2 (Roseiflexus castenholzii (strain DSM 13941 / HLO8)).